The chain runs to 363 residues: tRNA/tmRNA (uracil-C(5))-methyltransferase (363 aa).

S-adenosyl-L-methionine is bound by residues Q187, Y215, N220, E236, and D296. Catalysis depends on C321, which acts as the Nucleophile. The Proton acceptor role is filled by E355.

The protein belongs to the class I-like SAM-binding methyltransferase superfamily. RNA M5U methyltransferase family. TrmA subfamily.

It catalyses the reaction uridine(54) in tRNA + S-adenosyl-L-methionine = 5-methyluridine(54) in tRNA + S-adenosyl-L-homocysteine + H(+). The catalysed reaction is uridine(341) in tmRNA + S-adenosyl-L-methionine = 5-methyluridine(341) in tmRNA + S-adenosyl-L-homocysteine + H(+). Its function is as follows. Dual-specificity methyltransferase that catalyzes the formation of 5-methyluridine at position 54 (m5U54) in all tRNAs, and that of position 341 (m5U341) in tmRNA (transfer-mRNA). This is tRNA/tmRNA (uracil-C(5))-methyltransferase from Haemophilus influenzae (strain PittEE).